We begin with the raw amino-acid sequence, 421 residues long: MAMTITEKILAEHAGLDKVVPGQLITAQLDLALANDITGPVSIREFEKFGVETVWDKTKVALVPDHFTPNKDIASAELSKALREFAKKQGIVHYWEQGRVGVEHCLLPEQGVTLPGDVIIGADSHTCTYGALGAFATGVGSTDLAAGMATGEAWFRIPESIKFIFKGTNFQPWVSGKDLILYTIGKIGVDGARYRSMEFTGEGIAALSMDGRLTMCNMAVEAGAKNGIIPPDEKTLAYVNERAKRPYKVYHSDPDAQYVEVYEWDVADIPLQVAFPHLPENAKPVSEGKGIKIDQVVIGSCTNGRLEDMQVAAQILKGQKVHGDVRLIVIPGTQDIYKQAMQEGLIDIFIDAGAVVSTPTCGPCLGGYMGILAKGERALSTTNRNFVGRMGHPESEVYLSGPAVAAASAVTGEISHPEEVL.

[4Fe-4S] cluster contacts are provided by cysteine 301, cysteine 361, and cysteine 364.

The protein belongs to the aconitase/IPM isomerase family. LeuC type 2 subfamily. As to quaternary structure, heterodimer of LeuC and LeuD. [4Fe-4S] cluster serves as cofactor.

The catalysed reaction is (2R,3S)-3-isopropylmalate = (2S)-2-isopropylmalate. The protein operates within amino-acid biosynthesis; L-leucine biosynthesis; L-leucine from 3-methyl-2-oxobutanoate: step 2/4. Functionally, catalyzes the isomerization between 2-isopropylmalate and 3-isopropylmalate, via the formation of 2-isopropylmaleate. The chain is 3-isopropylmalate dehydratase large subunit from Desulfitobacterium hafniense (strain Y51).